We begin with the raw amino-acid sequence, 359 residues long: MKTLTVHTPSHSYPIFIGNGLLPQAGSLLKPHLGKRAAIITNETVAPLYLGTLQTALDAAGVSHFSIILPDGEAHKNWQTLNLIFDGLMQNRAERKTTLIALGGGVIGDMTGFAAATYQRGAPFVQIPTTLLSQVDSSVGGKTAINHPLGKNMIGAFYQPQAVLADLDTLHTLPARELSAGMAEVIKYGTLGDISFFEWLEQHMPELMALERAPLIQAVYRCCQMKADIVAQDETEQGIRAWLNLGHTFGHAIETEMGYGTWLHGEAVAAGCVLAARLSEQLGKISAADTARLAALLEAAGLPSAPPVFAFEKWLEHMSHDKKVSGGIMRFIGLNRLGEANITEITDTDILRRTLQPYL.

Residues 71 to 76 (DGEAHK), 105 to 109 (GVIGD), 129 to 130 (TT), Lys142, Lys151, and 169 to 172 (TLHT) each bind NAD(+). The Zn(2+) site is built by Glu184, His247, and His264.

The protein belongs to the sugar phosphate cyclases superfamily. Dehydroquinate synthase family. The cofactor is NAD(+). Co(2+) is required as a cofactor. Requires Zn(2+) as cofactor.

The protein localises to the cytoplasm. The catalysed reaction is 7-phospho-2-dehydro-3-deoxy-D-arabino-heptonate = 3-dehydroquinate + phosphate. It functions in the pathway metabolic intermediate biosynthesis; chorismate biosynthesis; chorismate from D-erythrose 4-phosphate and phosphoenolpyruvate: step 2/7. Catalyzes the conversion of 3-deoxy-D-arabino-heptulosonate 7-phosphate (DAHP) to dehydroquinate (DHQ). In Neisseria meningitidis serogroup A / serotype 4A (strain DSM 15465 / Z2491), this protein is 3-dehydroquinate synthase.